The following is a 484-amino-acid chain: Glutamate--tRNA ligase (484 aa).

Residues 11–21 carry the 'HIGH' region motif; that stretch reads PSPTGLLHIGN. The 'KMSKS' region motif lies at 255 to 259; that stretch reads KLSKR. Residue Lys-258 participates in ATP binding.

It belongs to the class-I aminoacyl-tRNA synthetase family. Glutamate--tRNA ligase type 1 subfamily. Monomer.

It is found in the cytoplasm. The catalysed reaction is tRNA(Glu) + L-glutamate + ATP = L-glutamyl-tRNA(Glu) + AMP + diphosphate. Catalyzes the attachment of glutamate to tRNA(Glu) in a two-step reaction: glutamate is first activated by ATP to form Glu-AMP and then transferred to the acceptor end of tRNA(Glu). This chain is Glutamate--tRNA ligase, found in Streptococcus suis (strain 98HAH33).